The chain runs to 545 residues: Monocarboxylate transporter 8 (545 aa).

Residues 1–98 (MALPSPASEE…VETRGTARGF (98 aa)) form a disordered region. The residue at position 2 (A2) is an N-acetylalanine. At 2 to 102 (ALPSPASEEA…GTARGFQPPE (101 aa)) the chain is on the cytoplasmic side. Repeat copies occupy residues 29–50 (PVPEPEPEPEPEPEPDPEPVPV) and 51–72 (PPPEPQPEPEPQPLPDPAPLPE). The tract at residues 29–72 (PVPEPEPEPEPEPEPDPEPVPVPPPEPQPEPEPQPLPDPAPLPE) is 2 X 22 AA approximate tandem repeats. Residues 33–45 (PEPEPEPEPEPDP) are compositionally biased toward acidic residues. Pro residues predominate over residues 46-70 (EPVPVPPPEPQPEPEPQPLPDPAPL). Residues 103 to 123 (GGFGWIVVFAATWCNGSIFGI) form a helical membrane-spanning segment. At 124-149 (HNSVGILYSMLLEEEKEKNRQVEFQA) the chain is on the extracellular side. Residues 150-170 (AWVGALAMGMIFFCSPIVSIF) traverse the membrane as a helical segment. Residues 171-177 (TDRLGCR) are Cytoplasmic-facing. The chain crosses the membrane as a helical span at residues 178–198 (ITATTGAAVAFIGLHTSSFTS). Over 199 to 206 (SLSLRYFT) the chain is Extracellular. A helical membrane pass occupies residues 207–227 (YGILFGCGCSFAFQPSLVILG). Over 228 to 235 (HYFQRRLG) the chain is Cytoplasmic. A helical transmembrane segment spans residues 236-256 (LANGVVSAGSSIFSMSFPFLI). Topologically, residues 257–264 (KMLGDKIK) are extracellular. The chain crosses the membrane as a helical span at residues 265–285 (LAQTFQVLSTFMFVLTLLSLT). The Cytoplasmic segment spans residues 286–328 (YRPLLPSSQDTPSKRGAHTLRQRFLVQFRKYFNMRVFRQRTYR). A helical membrane pass occupies residues 329 to 349 (IWAFGIAAAALGYFVPYVHLM). Over 350–362 (KYVEDKFKEIKET) the chain is Extracellular. The helical transmembrane segment at 363-383 (WVLLVCIGATSGLGRLVSGHI) threads the bilayer. The Cytoplasmic segment spans residues 384–392 (SDSIPGLKK). A helical membrane pass occupies residues 393–413 (IYLQVLSFLLLGLMSMMIPLC). Residues 414-415 (RD) lie on the Extracellular side of the membrane. The helical transmembrane segment at 416-436 (FGGLIVVCLFLGLCDGFFITI) threads the bilayer. Over 437 to 453 (MAPIAFELVGPMQASQA) the chain is Cytoplasmic. The helical transmembrane segment at 454–474 (IGYLLGMMALPMIAGPPIAGL) threads the bilayer. At 475-483 (LRNCFGDYH) the chain is on the extracellular side. The helical transmembrane segment at 484–504 (VAFYFAGVPPIIGAVILFFVP) threads the bilayer. The Cytoplasmic portion of the chain corresponds to 505–545 (LMHQRMFKKEQRDSSKDKMLSHDPDPNGELLPGSPTPEEPI). The span at 514–529 (EQRDSSKDKMLSHDPD) shows a compositional bias: basic and acidic residues. The interval 514-545 (EQRDSSKDKMLSHDPDPNGELLPGSPTPEEPI) is disordered. T540 is modified (phosphothreonine).

It belongs to the major facilitator superfamily. Monocarboxylate porter (TC 2.A.1.13) family. In terms of assembly, monomer. Homodimer. Homooligomer. As to expression, expressed in cerebral microvessels.

It is found in the cell membrane. The protein localises to the apical cell membrane. The catalysed reaction is 3,3',5-triiodo-L-thyronine(out) = 3,3',5-triiodo-L-thyronine(in). The enzyme catalyses 3,3',5'-triiodo-L-thyronine(out) = 3,3',5'-triiodo-L-thyronine(in). It carries out the reaction L-thyroxine(out) = L-thyroxine(in). It catalyses the reaction 3,3'-diiodo-L-thyronine(out) = 3,3'-diiodo-L-thyronine(in). In terms of biological role, specific thyroid hormone transmembrane transporter, that mediates both uptake and efflux of thyroid hormones across the cell membrane independently of pH or a Na(+) gradient. Major substrates are the iodothyronines T3 and T4 and to a lesser extent rT3 and 3,3-diiodothyronine (3,3'-T2). Acts as an important mediator of thyroid hormone transport, especially T3, through the blood-brain barrier. This is Monocarboxylate transporter 8 (Slc16a2) from Mus musculus (Mouse).